The chain runs to 730 residues: Envelope glycoprotein H (730 aa).

A signal peptide spans 1–21 (MQGLAFLAALACWRCISLTCG). The Virion surface segment spans residues 22-706 (ATGALPTTAT…MYRRRAASAL (685 aa)). 15 N-linked (GlcNAc...) asparagine; by host glycosylation sites follow: Asn46, Asn54, Asn101, Asn125, Asn131, Asn188, Asn209, Asn215, Asn267, Asn274, Asn365, Asn556, Asn613, Asn626, and Asn688. The segment at 190–254 (SGVALYGVVS…RNAKYALVAI (65 aa)) is interaction with gL. The helical transmembrane segment at 707 to 727 (FLILSFIGFSGVIYFLYRLFS) threads the bilayer. Residues 728 to 730 (ILY) are Intravirion-facing.

This sequence belongs to the herpesviridae glycoprotein H family. Interacts with glycoprotein L (gL); this interaction is necessary for the correct processing and cell surface expression of gH. The heterodimer gH/gL seems to interact with gB trimers during fusion. When in complex with gL, interacts with host EPHA2; this interaction triggers EPHA2 phosphorylation and endocytosis allowing KSHV entry. N-glycosylated, O-glycosylated, and sialylated.

Its subcellular location is the virion membrane. The protein localises to the host cell membrane. It is found in the host endosome membrane. In terms of biological role, the heterodimer glycoprotein H-glycoprotein L is required for the fusion of viral and plasma membranes leading to virus entry into the host cell. Following initial binding to host receptor, membrane fusion is mediated by the fusion machinery composed of gB and the heterodimer gH/gL. May also be involved in the fusion between the virion envelope and the outer nuclear membrane during virion morphogenesis. Targets host EPHA2 to promote KSHV entry. This Homo sapiens (Human) protein is Envelope glycoprotein H.